We begin with the raw amino-acid sequence, 284 residues long: Phosphatidylglycerol--prolipoprotein diacylglyceryl transferase (284 aa).

Helical transmembrane passes span 21–41, 62–82, 106–126, 136–156, 190–210, 218–238, and 252–272; these read IEVHWYGLAYACAIVVAFYMA, YFLWAELGIVLGARVGYILIY, FVGIRGMSYHGGLVGFLIASY, LLIYLDLIAISLPLGYVFGRI, PSQLIEAFLEGVIVFLMVMWA, GLLIVVYGLGYSLMRFIAEFY, and LSMGQILSLFMVIVSLGILLY. R155 is an a 1,2-diacyl-sn-glycero-3-phospho-(1'-sn-glycerol) binding site.

This sequence belongs to the Lgt family.

The protein localises to the cell inner membrane. The enzyme catalyses L-cysteinyl-[prolipoprotein] + a 1,2-diacyl-sn-glycero-3-phospho-(1'-sn-glycerol) = an S-1,2-diacyl-sn-glyceryl-L-cysteinyl-[prolipoprotein] + sn-glycerol 1-phosphate + H(+). It participates in protein modification; lipoprotein biosynthesis (diacylglyceryl transfer). Functionally, catalyzes the transfer of the diacylglyceryl group from phosphatidylglycerol to the sulfhydryl group of the N-terminal cysteine of a prolipoprotein, the first step in the formation of mature lipoproteins. The chain is Phosphatidylglycerol--prolipoprotein diacylglyceryl transferase from Helicobacter pylori (strain P12).